Here is a 151-residue protein sequence, read N- to C-terminus: MTTDTHTLHIEEILELLPHRFPFLLVDRVLDFEKGKFLRAVKNVSFNEPFFQGHFPGKPIFPGVLILEAMAQATGILAFKSAGKLAPGELYYFAAIDEARFKRPVQPGDQMILEVEFIKERRGVARFKGVAKVDGEVACEASMMCARRREA.

His54 is a catalytic residue.

This sequence belongs to the thioester dehydratase family. FabZ subfamily.

Its subcellular location is the cytoplasm. The catalysed reaction is a (3R)-hydroxyacyl-[ACP] = a (2E)-enoyl-[ACP] + H2O. In terms of biological role, involved in unsaturated fatty acids biosynthesis. Catalyzes the dehydration of short chain beta-hydroxyacyl-ACPs and long chain saturated and unsaturated beta-hydroxyacyl-ACPs. The protein is 3-hydroxyacyl-[acyl-carrier-protein] dehydratase FabZ of Sodalis glossinidius (strain morsitans).